The chain runs to 162 residues: Interleukin-15 (162 aa).

An N-terminal signal peptide occupies residues 1-29 (MRILKPYLRSTSIQCYLCLLLNSHFLTEA). Positions 30-48 (GIHVFILGCISAGLPKTEA) are excised as a propeptide. Cystine bridges form between C83-C133 and C90-C136. N-linked (GlcNAc...) asparagine glycosylation is found at N113, N121, and N127.

This sequence belongs to the IL-15/IL-21 family.

The protein resides in the secreted. Functionally, cytokine that plays a major role in the development of inflammatory and protective immune responses to microbial invaders and parasites by modulating immune cells of both the innate and adaptive immune systems. Stimulates the proliferation of natural killer cells, T-cells and B-cells and promotes the secretion of several cytokines. In monocytes, induces the production of IL8 and monocyte chemotactic protein 1/CCL2, two chemokines that attract neutrophils and monocytes respectively to sites of infection. Unlike most cytokines, which are secreted in soluble form, IL15 is expressed in association with its high affinity IL15RA on the surface of IL15-producing cells and delivers signals to target cells that express IL2RB and IL2RG receptor subunits. Binding to its receptor triggers the phosphorylation of JAK1 and JAK3 and the recruitment and subsequent phosphorylation of signal transducer and activator of transcription-3/STAT3 and STAT5. In mast cells, induces the rapid tyrosine phosphorylation of STAT6 and thereby controls mast cell survival and release of cytokines such as IL4. The chain is Interleukin-15 (IL15) from Ovis aries (Sheep).